Consider the following 397-residue polypeptide: Carnitine transport ATP-binding protein OpuCA (397 aa).

Positions 2-236 constitute an ABC transporter domain; the sequence is LKFEHVTKTY…PANSFVEDFI (235 aa). 35-42 lines the ATP pocket; it reads GPSGCGKT. CBS domains follow at residues 255-311 and 315-373; these read MNTN…ATSV and IEKN…WGTL. The segment at 377–397 is disordered; sequence TENQEEQADSKTTEPEMKQEG. Residues 384-397 show a composition bias toward basic and acidic residues; it reads ADSKTTEPEMKQEG.

Belongs to the ABC transporter superfamily. The complex is composed of two ATP-binding proteins (OpuCA), two transmembrane proteins (OpuCB and OpuCD) and a solute-binding protein (OpuCC).

It carries out the reaction a quaternary ammonium(out) + ATP + H2O = a quaternary ammonium(in) + ADP + phosphate + H(+). Part of the ABC transporter complex OpuCABCD involved in carnitine uptake. Probably responsible for energy coupling to the transport system. Involved, with BetL and GbuABC, in osmoprotection and cryoprotection of Listeria. Can also mediate weak glycine betaine transport. The polypeptide is Carnitine transport ATP-binding protein OpuCA (opuCA) (Listeria monocytogenes serotype 1/2a (strain 10403S)).